We begin with the raw amino-acid sequence, 260 residues long: 5'-nucleotidase SurE (260 aa).

4 residues coordinate a divalent metal cation: Asp19, Asp20, Ser51, and Asn104.

This sequence belongs to the SurE nucleotidase family. It depends on a divalent metal cation as a cofactor.

The protein localises to the cytoplasm. The catalysed reaction is a ribonucleoside 5'-phosphate + H2O = a ribonucleoside + phosphate. Nucleotidase that shows phosphatase activity on nucleoside 5'-monophosphates. The polypeptide is 5'-nucleotidase SurE (Paramagnetospirillum magneticum (strain ATCC 700264 / AMB-1) (Magnetospirillum magneticum)).